The primary structure comprises 255 residues: Type III pantothenate kinase (255 aa).

6–13 (DIGNTNTV) lines the ATP pocket. Substrate contacts are provided by residues Tyr100 and 107–110 (GADR). Catalysis depends on Asp109, which acts as the Proton acceptor. A K(+)-binding site is contributed by Asp129. Thr132 provides a ligand contact to ATP. Thr185 serves as a coordination point for substrate.

The protein belongs to the type III pantothenate kinase family. Homodimer. The cofactor is NH4(+). Requires K(+) as cofactor.

The protein localises to the cytoplasm. The enzyme catalyses (R)-pantothenate + ATP = (R)-4'-phosphopantothenate + ADP + H(+). It functions in the pathway cofactor biosynthesis; coenzyme A biosynthesis; CoA from (R)-pantothenate: step 1/5. In terms of biological role, catalyzes the phosphorylation of pantothenate (Pan), the first step in CoA biosynthesis. This chain is Type III pantothenate kinase, found in Desulfosudis oleivorans (strain DSM 6200 / JCM 39069 / Hxd3) (Desulfococcus oleovorans).